Here is a 393-residue protein sequence, read N- to C-terminus: S-adenosylmethionine synthase 3 (393 aa).

A Mg(2+)-binding site is contributed by glutamate 9. An ATP-binding site is contributed by histidine 15. Glutamate 43 lines the K(+) pocket. 2 residues coordinate L-methionine: glutamate 56 and glutamine 99. ATP contacts are provided by residues 167-169 (DGK), 235-238 (SGRF), aspartate 246, 252-253 (RK), alanine 269, lysine 273, and lysine 277. Aspartate 246 is an L-methionine binding site. Lysine 277 provides a ligand contact to L-methionine.

Belongs to the AdoMet synthase family. Homotetramer. The cofactor is Mn(2+). It depends on Mg(2+) as a cofactor. Co(2+) serves as cofactor. Requires K(+) as cofactor.

The protein resides in the cytoplasm. It catalyses the reaction L-methionine + ATP + H2O = S-adenosyl-L-methionine + phosphate + diphosphate. Its pathway is amino-acid biosynthesis; S-adenosyl-L-methionine biosynthesis; S-adenosyl-L-methionine from L-methionine: step 1/1. Functionally, catalyzes the formation of S-adenosylmethionine from methionine and ATP. The reaction comprises two steps that are both catalyzed by the same enzyme: formation of S-adenosylmethionine (AdoMet) and triphosphate, and subsequent hydrolysis of the triphosphate. This Petunia hybrida (Petunia) protein is S-adenosylmethionine synthase 3 (SAM3).